Here is a 224-residue protein sequence, read N- to C-terminus: Myogenin (224 aa).

Serine 77 and serine 79 each carry phosphoserine; by CaMK2G. Residues 81-132 (DRRRAATLREKRRLKKVNEAFEALKRSTLLNPNQRLPKVEILRSAIQYIERL) enclose the bHLH domain. Residue threonine 87 is modified to Phosphothreonine; by CaMK2G.

As to quaternary structure, homodimer and heterodimer with E12; heterodimerization enhances MYOG DNA-binding and transcriptional activities. Interacts with SMARCA4/BRG1/BAF190A. Interacts (via C-terminal region) with SSRP1 and SUPT16H; the interaction is indicative of an interaction with the FACT complex. nteracts with CSRP3. In terms of processing, phosphorylated by CAMK2G on threonine and serine amino acids in a muscle activity-dependent manner. Phosphorylation of Thr-87 impairs both DNA-binding and trans-activation functions in contracting muscles. In terms of tissue distribution, expressed in myoblast cells. Expressed weakly in myotubes (at protein level). Expressed strongly in denervated muscles and in satellite cells isolated from denervated muscles. Expressed weakly in innervated muscle and in satellite cells isolated from innervated muscles.

Its subcellular location is the nucleus. Its function is as follows. Acts as a transcriptional activator that promotes transcription of muscle-specific target genes and plays a role in muscle differentiation, cell cycle exit and muscle atrophy. Essential for the development of functional embryonic skeletal fiber muscle differentiation. However is dispensable for postnatal skeletal muscle growth; phosphorylation by CAMK2G inhibits its transcriptional activity in respons to muscle activity. Required for the recruitment of the FACT complex to muscle-specific promoter regions, thus promoting gene expression initiation. During terminal myoblast differentiation, plays a role as a strong activator of transcription at loci with an open chromatin structure previously initiated by MYOD1. Together with MYF5 and MYOD1, co-occupies muscle-specific gene promoter core regions during myogenesis. Also cooperates with myocyte-specific enhancer factor MEF2D and BRG1-dependent recruitment of SWI/SNF chromatin-remodeling enzymes to alter chromatin structure at myogenic late gene promoters. Facilitates cell cycle exit during terminal muscle differentiation through the up-regulation of miR-20a expression, which in turn represses genes involved in cell cycle progression. Binds to the E-box containing (E1) promoter region of the miR-20a gene. Also plays a role in preventing reversal of muscle cell differentiation. Contributes to the atrophy-related gene expression in adult denervated muscles. Induces fibroblasts to differentiate into myoblasts. The chain is Myogenin (Myog) from Mus musculus (Mouse).